Reading from the N-terminus, the 31-residue chain is Cytochrome b6-f complex subunit 6 (31 aa).

A helical transmembrane segment spans residues 4-24 (ITSYFGFLLVVLTITSALFIG).

This sequence belongs to the PetL family. In terms of assembly, the 4 large subunits of the cytochrome b6-f complex are cytochrome b6, subunit IV (17 kDa polypeptide, PetD), cytochrome f and the Rieske protein, while the 4 small subunits are PetG, PetL, PetM and PetN. The complex functions as a dimer.

It localises to the plastid. The protein localises to the chloroplast thylakoid membrane. In terms of biological role, component of the cytochrome b6-f complex, which mediates electron transfer between photosystem II (PSII) and photosystem I (PSI), cyclic electron flow around PSI, and state transitions. PetL is important for photoautotrophic growth as well as for electron transfer efficiency and stability of the cytochrome b6-f complex. The protein is Cytochrome b6-f complex subunit 6 of Jasminum nudiflorum (Winter jasmine).